The primary structure comprises 415 residues: Vascular endothelial growth factor C (415 aa).

A signal peptide spans Met-1–Ala-31. The propeptide occupies Phe-32–Ala-107. Intrachain disulfides connect Cys-127/Cys-169, Cys-158/Cys-205, and Cys-162/Cys-207. Residues Asn-171, Asn-201, and Asn-236 are each glycosylated (N-linked (GlcNAc...) asparagine). Residues Ser-224 to Asn-415 constitute a propeptide that is removed on maturation. 4 tandem repeats follow at residues Cys-276 to Cys-291, Cys-300 to Cys-315, Cys-324 to Cys-339, and Cys-343 to Cys-358. Residues Cys-276–Cys-358 form a 4 X 16 AA repeats of C-X(10)-C-X-C-X(1,3)-C region.

The protein belongs to the PDGF/VEGF growth factor family. In terms of assembly, homodimer; non-covalent and antiparallel. Interacts with FLT4/VEGFR3; the interaction is required for FLT4/VEGFR3 homodimarization and activation. In terms of processing, undergoes a complex proteolytic maturation which generates a variety of processed secreted forms with increased activity toward VEGFR-3, but only the fully processed form could activate VEGFR-2. VEGF-C first form an antiparallel homodimer linked by disulfide bonds. Before secretion, a cleavage occurs between Arg-223 and Ser-224 producing a heterotetramer. The next extracellular step of the processing removes the N-terminal propeptide. Finally the mature VEGF-C is composed mostly of two VEGF homology domains (VHDs) bound by non-covalent interactions. Highly expressed in the lung, ovary, preputial gland and the adrenal gland. Expressed in the post-pubertal mammary glands.

The protein resides in the secreted. Functionally, growth factor active in angiogenesis, and endothelial cell growth, stimulating their proliferation and migration and also has effects on the permeability of blood vessels. May function in angiogenesis of the venous and lymphatic vascular systems during embryogenesis, and also in the maintenance of differentiated lymphatic endothelium in adults. Binds and activates KDR/VEGFR2 and FLT4/VEGFR3 receptors. This is Vascular endothelial growth factor C (Vegfc) from Rattus norvegicus (Rat).